Reading from the N-terminus, the 343-residue chain is MRN complex-interacting protein (343 aa).

The tract at residues 75 to 104 is disordered; it reads EETVSASEEENVGHQQAGNVKQQEKSQPSE. Residues 87 to 104 show a composition bias toward polar residues; it reads GHQQAGNVKQQEKSQPSE. Residues Ser100 and Ser115 each carry the phosphoserine modification. Disordered regions lie at residues 128-178, 193-212, and 230-324; these read SKQP…WGPQ, SPCLQENSADCSAGELRGPG, and AQFV…AQNP. The Nuclear localization signal (NLS) signature appears at 148-151; the sequence is RKRK. Residues 193 to 202 are compositionally biased toward polar residues; the sequence is SPCLQENSAD. The tract at residues 213 to 237 is necessary for the association with the MRN complex; that stretch reads KELWSPIQQVTATSSKWAQFVLPPR. Basic and acidic residues predominate over residues 240–255; the sequence is SHVDSEQPRSLQRDPR.

The protein belongs to the MRNIP family. In terms of assembly, associates with the MRE11-RAD50-NBN (MRN) damage-sensing complex; this association is constitutive. Interacts with MRE11. Interacts with NBN. Interacts with RAD50. Post-translationally, phosphorylated; phosphorylation is constitutive and occurs in the absence of any DNA-damaging stimulus. Phosphorylation on Ser-115 is necessary for its nuclear retention.

The protein resides in the nucleus. Its subcellular location is the nucleoplasm. Functionally, plays a role in the cellular response to DNA damage and the maintenance of genome stability through its association with the MRN damage-sensing complex. Promotes chromatin loading and activity of the MRN complex to facilitate subsequent ATM-mediated DNA damage response signaling and DNA repair. This chain is MRN complex-interacting protein, found in Homo sapiens (Human).